The sequence spans 153 residues: Hsp90 co-chaperone HCH1 (153 aa).

Belongs to the AHA1 family. As to quaternary structure, monomer. Interacts with HSP82.

The protein resides in the cytoplasm. The protein localises to the nucleus. In terms of biological role, co-chaperone that binds to the molecular chaperone HSP82 and stimulates its ATPase activity. Although not essential, it confers thermotolerance when intracellular levels of HSP82 are limiting. The polypeptide is Hsp90 co-chaperone HCH1 (HCH1) (Saccharomyces cerevisiae (strain ATCC 204508 / S288c) (Baker's yeast)).